Reading from the N-terminus, the 860-residue chain is Leucine--tRNA ligase (860 aa).

The 'HIGH' region signature appears at 42-52; sequence PYPSGRLHMGH. A 'KMSKS' region motif is present at residues 619–623; the sequence is KMSKS. Lysine 622 is a binding site for ATP.

It belongs to the class-I aminoacyl-tRNA synthetase family.

The protein resides in the cytoplasm. The catalysed reaction is tRNA(Leu) + L-leucine + ATP = L-leucyl-tRNA(Leu) + AMP + diphosphate. This chain is Leucine--tRNA ligase, found in Shigella sonnei (strain Ss046).